We begin with the raw amino-acid sequence, 156 residues long: Ribosomal RNA large subunit methyltransferase H (156 aa).

S-adenosyl-L-methionine-binding positions include L73, G104, and L123–L128.

It belongs to the RNA methyltransferase RlmH family. Homodimer.

It is found in the cytoplasm. The enzyme catalyses pseudouridine(1915) in 23S rRNA + S-adenosyl-L-methionine = N(3)-methylpseudouridine(1915) in 23S rRNA + S-adenosyl-L-homocysteine + H(+). In terms of biological role, specifically methylates the pseudouridine at position 1915 (m3Psi1915) in 23S rRNA. The polypeptide is Ribosomal RNA large subunit methyltransferase H (Aliivibrio salmonicida (strain LFI1238) (Vibrio salmonicida (strain LFI1238))).